The following is a 469-amino-acid chain: Cysteine--tRNA ligase (469 aa).

Position 28 (Cys28) interacts with Zn(2+). The 'HIGH' region motif lies at 30 to 40 (CTVYDLCHIGH). Cys216, His241, and Glu245 together coordinate Zn(2+). The short motif at 273 to 277 (KMSKS) is the 'KMSKS' region element. Lys276 provides a ligand contact to ATP.

This sequence belongs to the class-I aminoacyl-tRNA synthetase family. As to quaternary structure, monomer. Requires Zn(2+) as cofactor.

It is found in the cytoplasm. The catalysed reaction is tRNA(Cys) + L-cysteine + ATP = L-cysteinyl-tRNA(Cys) + AMP + diphosphate. The protein is Cysteine--tRNA ligase of Colwellia psychrerythraea (strain 34H / ATCC BAA-681) (Vibrio psychroerythus).